A 202-amino-acid chain; its full sequence is LexA repressor 2 (202 aa).

A DNA-binding region (H-T-H motif) is located at residues 28–48 (LADIATRFGFASRSVARKHIT). Residues S123 and K160 each act as for autocatalytic cleavage activity in the active site.

Belongs to the peptidase S24 family. In terms of assembly, homodimer.

It carries out the reaction Hydrolysis of Ala-|-Gly bond in repressor LexA.. Its function is as follows. Represses a number of genes involved in the response to DNA damage (SOS response), including recA and lexA. In the presence of single-stranded DNA, RecA interacts with LexA causing an autocatalytic cleavage which disrupts the DNA-binding part of LexA, leading to derepression of the SOS regulon and eventually DNA repair. The protein is LexA repressor 2 of Pseudomonas putida (strain ATCC 47054 / DSM 6125 / CFBP 8728 / NCIMB 11950 / KT2440).